A 621-amino-acid chain; its full sequence is Complex I assembly factor ACAD9, mitochondrial (621 aa).

The N-terminal 37 residues, 1-37 (MSGCGLFLRTTAAARACRGLVVSTANRRLLRTSPPVR), are a transit peptide targeting the mitochondrion. The residue at position 41 (Lys-41) is an N6-acetyllysine. Lys-92 carries the N6-succinyllysine modification. Catalysis depends on Glu-426, which acts as the Proton acceptor. A Phosphothreonine modification is found at Thr-478. Lys-521 carries the N6-acetyllysine; alternate modification. Lys-521 carries the N6-succinyllysine; alternate modification.

Belongs to the acyl-CoA dehydrogenase family. As to quaternary structure, homodimer. Interacts with NDUFAF1 and ECSIT. Part of the mitochondrial complex I assembly/MCIA complex that comprises at least the core subunits TMEM126B, NDUFAF1, ECSIT and ACAD9 and complement subunits such as COA1 and TMEM186. Interacts with TMEM70 and TMEM242. Requires FAD as cofactor. Ubiquitously expressed in most normal human tissues and cancer cell lines with high level of expression in heart, skeletal muscles, brain, kidney and liver. In the cerebellum uniquely expressed in the granular layer (at protein level).

The protein resides in the mitochondrion inner membrane. The enzyme catalyses eicosanoyl-CoA + oxidized [electron-transfer flavoprotein] + H(+) = (2E)-eicosenoyl-CoA + reduced [electron-transfer flavoprotein]. The catalysed reaction is octadecanoyl-CoA + oxidized [electron-transfer flavoprotein] + H(+) = (2E)-octadecenoyl-CoA + reduced [electron-transfer flavoprotein]. It carries out the reaction oxidized [electron-transfer flavoprotein] + hexadecanoyl-CoA + H(+) = (2E)-hexadecenoyl-CoA + reduced [electron-transfer flavoprotein]. It catalyses the reaction decanoyl-CoA + oxidized [electron-transfer flavoprotein] + H(+) = (2E)-decenoyl-CoA + reduced [electron-transfer flavoprotein]. The enzyme catalyses nonanoyl-CoA + oxidized [electron-transfer flavoprotein] + H(+) = (2E)-nonenoyl-CoA + reduced [electron-transfer flavoprotein]. The catalysed reaction is pentadecanoyl-CoA + oxidized [electron-transfer flavoprotein] + H(+) = (2E)-pentadecenoyl-CoA + reduced [electron-transfer flavoprotein]. It carries out the reaction undecanoyl-CoA + oxidized [electron-transfer flavoprotein] + H(+) = trans-2-undecenoyl-CoA + reduced [electron-transfer flavoprotein]. It catalyses the reaction (9Z)-hexadecenoyl-CoA + oxidized [electron-transfer flavoprotein] + H(+) = (2E,9Z)-hexadecadienoyl-CoA + reduced [electron-transfer flavoprotein]. The enzyme catalyses heptadecanoyl-CoA + oxidized [electron-transfer flavoprotein] + H(+) = trans-2-heptadecenoyl-CoA + reduced [electron-transfer flavoprotein]. The catalysed reaction is (9E)-octadecenoyl-CoA + oxidized [electron-transfer flavoprotein] + H(+) = (2E,9E)-octadecadienoyl-CoA + reduced [electron-transfer flavoprotein]. It carries out the reaction oxidized [electron-transfer flavoprotein] + (9Z)-octadecenoyl-CoA + H(+) = (2E,9Z)-octadecadienoyl-CoA + reduced [electron-transfer flavoprotein]. It catalyses the reaction (9Z,12Z)-octadecadienoyl-CoA + oxidized [electron-transfer flavoprotein] + H(+) = (2E,9Z,12Z)-octadecatrienoyl-CoA + reduced [electron-transfer flavoprotein]. The enzyme catalyses (4Z,7Z,10Z,13Z,16Z,19Z)-docosahexaenoyl-CoA + oxidized [electron-transfer flavoprotein] + H(+) = (2E,4Z,7Z,10Z,13Z,16Z,19Z)-docosaheptaenoyl-CoA + reduced [electron-transfer flavoprotein]. The catalysed reaction is tetradecanoyl-CoA + oxidized [electron-transfer flavoprotein] + H(+) = (2E)-tetradecenoyl-CoA + reduced [electron-transfer flavoprotein]. In terms of biological role, as part of the MCIA complex, primarily participates in the assembly of the mitochondrial complex I and therefore plays a role in oxidative phosphorylation. This moonlighting protein also has a dehydrogenase activity toward a broad range of substrates with greater specificity for long-chain unsaturated acyl-CoAs. However, in vivo, it does not seem to play a primary role in fatty acid oxidation. In addition, the function in complex I assembly is independent of the dehydrogenase activity of the protein. The protein is Complex I assembly factor ACAD9, mitochondrial of Homo sapiens (Human).